A 296-amino-acid chain; its full sequence is Probable porphobilinogen deaminase (296 aa).

Cys-241 carries the S-(dipyrrolylmethanemethyl)cysteine modification.

It belongs to the HMBS family. Dipyrromethane serves as cofactor.

It catalyses the reaction 4 porphobilinogen + H2O = hydroxymethylbilane + 4 NH4(+). The protein operates within porphyrin-containing compound metabolism; protoporphyrin-IX biosynthesis; coproporphyrinogen-III from 5-aminolevulinate: step 2/4. In terms of biological role, tetrapolymerization of the monopyrrole PBG into the hydroxymethylbilane pre-uroporphyrinogen in several discrete steps. This is Probable porphobilinogen deaminase from Pyrobaculum neutrophilum (strain DSM 2338 / JCM 9278 / NBRC 100436 / V24Sta) (Thermoproteus neutrophilus).